A 478-amino-acid polypeptide reads, in one-letter code: ATP synthase subunit beta (478 aa).

Residue 158 to 165 (GGAGVGKT) coordinates ATP.

It belongs to the ATPase alpha/beta chains family. F-type ATPases have 2 components, CF(1) - the catalytic core - and CF(0) - the membrane proton channel. CF(1) has five subunits: alpha(3), beta(3), gamma(1), delta(1), epsilon(1). CF(0) has three main subunits: a(1), b(2) and c(9-12). The alpha and beta chains form an alternating ring which encloses part of the gamma chain. CF(1) is attached to CF(0) by a central stalk formed by the gamma and epsilon chains, while a peripheral stalk is formed by the delta and b chains.

The protein localises to the cell inner membrane. It catalyses the reaction ATP + H2O + 4 H(+)(in) = ADP + phosphate + 5 H(+)(out). Produces ATP from ADP in the presence of a proton gradient across the membrane. The catalytic sites are hosted primarily by the beta subunits. This Rhizobium leguminosarum bv. trifolii (strain WSM2304) protein is ATP synthase subunit beta.